The chain runs to 336 residues: Ketol-acid reductoisomerase (NADP(+)) (336 aa).

The KARI N-terminal Rossmann domain occupies 1-182 (MAVIYYDKDA…GVTRAGVIET (182 aa)). NADP(+) is bound by residues 25–28 (YGSQ), Arg48, Ser51, Ser53, and 83–86 (DEHQ). The active site involves His108. Gly134 lines the NADP(+) pocket. The KARI C-terminal knotted domain occupies 183–328 (TFKEETETDL…KELRKMMPWL (146 aa)). Mg(2+)-binding residues include Asp191, Glu195, Glu227, and Glu231. Substrate is bound at residue Ser252.

This sequence belongs to the ketol-acid reductoisomerase family. It depends on Mg(2+) as a cofactor.

The catalysed reaction is (2R)-2,3-dihydroxy-3-methylbutanoate + NADP(+) = (2S)-2-acetolactate + NADPH + H(+). It carries out the reaction (2R,3R)-2,3-dihydroxy-3-methylpentanoate + NADP(+) = (S)-2-ethyl-2-hydroxy-3-oxobutanoate + NADPH + H(+). The protein operates within amino-acid biosynthesis; L-isoleucine biosynthesis; L-isoleucine from 2-oxobutanoate: step 2/4. It participates in amino-acid biosynthesis; L-valine biosynthesis; L-valine from pyruvate: step 2/4. Functionally, involved in the biosynthesis of branched-chain amino acids (BCAA). Catalyzes an alkyl-migration followed by a ketol-acid reduction of (S)-2-acetolactate (S2AL) to yield (R)-2,3-dihydroxy-isovalerate. In the isomerase reaction, S2AL is rearranged via a Mg-dependent methyl migration to produce 3-hydroxy-3-methyl-2-ketobutyrate (HMKB). In the reductase reaction, this 2-ketoacid undergoes a metal-dependent reduction by NADPH to yield (R)-2,3-dihydroxy-isovalerate. In Thermotoga maritima (strain ATCC 43589 / DSM 3109 / JCM 10099 / NBRC 100826 / MSB8), this protein is Ketol-acid reductoisomerase (NADP(+)).